A 142-amino-acid polypeptide reads, in one-letter code: Large ribosomal subunit protein uL11 (142 aa).

It belongs to the universal ribosomal protein uL11 family. Part of the ribosomal stalk of the 50S ribosomal subunit. Interacts with L10 and the large rRNA to form the base of the stalk. L10 forms an elongated spine to which L12 dimers bind in a sequential fashion forming a multimeric L10(L12)X complex. Post-translationally, one or more lysine residues are methylated.

Its function is as follows. Forms part of the ribosomal stalk which helps the ribosome interact with GTP-bound translation factors. In Actinobacillus succinogenes (strain ATCC 55618 / DSM 22257 / CCUG 43843 / 130Z), this protein is Large ribosomal subunit protein uL11.